A 406-amino-acid polypeptide reads, in one-letter code: UPF0761 membrane protein NMB0524 (406 aa).

Helical transmembrane passes span 43 to 63 (LLAL…FPVF), 100 to 120 (LTAI…RTID), 139 to 159 (FLVY…GISF), 176 to 196 (WSGA…LWGL), 210 to 230 (AFVG…LFTW), and 248 to 268 (VPFF…GAVL).

It belongs to the UPF0761 family.

It is found in the cell inner membrane. This Neisseria meningitidis serogroup B (strain ATCC BAA-335 / MC58) protein is UPF0761 membrane protein NMB0524.